A 433-amino-acid chain; its full sequence is ATP-sensitive inward rectifier potassium channel 12 (433 aa).

At 1–77 the chain is on the cytoplasmic side; it reads MTAASRANPY…LADMFTTCVD (77 aa). An S-nitrosocysteine modification is found at C75. A helical transmembrane segment spans residues 78–104; sequence IRWRYMLLIFSLAFLASWLLFGIIFWV. 2 residues coordinate a 1,2-diacyl-sn-glycero-3-phospho-(1D-myo-inositol-4,5-bisphosphate): R79 and R81. The Extracellular portion of the chain corresponds to 105–129; that stretch reads IAVAHGDLEPAEGRGRTPCVMQVHG. C123 and C155 are joined by a disulfide. An intramembrane region (helical; Pore-forming) is located at residues 130-146; the sequence is FMAAFLFSIETQTTIGY. K(+)-binding residues include T143, I144, G145, and Y146. Residues 143-148 carry the Selectivity filter motif; the sequence is TIGYGL. The Extracellular portion of the chain corresponds to 147-155; that stretch reads GLRCVTEEC. Residues 156 to 183 traverse the membrane as a helical segment; it reads PVAVFMVVAQSIVGCIIDSFMIGAIMAK. A 1,2-diacyl-sn-glycero-3-phospho-(1D-myo-inositol-4,5-bisphosphate) contacts are provided by K183 and K188. Residues 184–433 are Cytoplasmic-facing; that stretch reads MARPKKRAQT…QRPYRRESEI (250 aa). Positions 387–433 are disordered; it reads DEEDEADGDQDGRSRDGLSPQARHDFDRLQAGGGVLEQRPYRRESEI. Over residues 396–414 the composition is skewed to basic and acidic residues; sequence QDGRSRDGLSPQARHDFDR. Residues 431-433 carry the PDZ-binding motif; it reads SEI.

It belongs to the inward rectifier-type potassium channel (TC 1.A.2.1) family. KCNJ12 subfamily. Homotetramer. Forms heteromer with KCNJ4. Can form heteromeric channels with Kir2.6/KCNJ18. Association, via its PDZ-recognition domain, with LIN7A, LIN7B, LIN7C, DLG1, CASK and APBA1 plays a key role in its localization and trafficking.

Its subcellular location is the membrane. It is found in the cell membrane. It localises to the sarcolemma. The protein localises to the T-tubule. It carries out the reaction K(+)(in) = K(+)(out). Its activity is regulated as follows. Activated by phosphatidylinositol 4,5-biphosphate (PtdIns(4,5)P2). PtdIns(4,5)P2 binding to the cytoplasmic side of the channel triggers a conformation change leading to channel opening. Inhibited by Ba(2+). Functionally, inward rectifying potassium channel that probably participates in controlling the resting membrane potential in electrically excitable cells. Probably participates in establishing action potential waveform and excitability of neuronal and muscle tissues. Inward rectifier potassium channels are characterized by a greater tendency to allow potassium to flow into the cell rather than out of it. Their voltage dependence is regulated by the concentration of extracellular potassium; as external potassium is raised, the voltage range of the channel opening shifts to more positive voltages. The inward rectification is mainly due to the blockage of outward current by internal magnesium. The protein is ATP-sensitive inward rectifier potassium channel 12 (KCNJ12) of Homo sapiens (Human).